The following is a 392-amino-acid chain: Formate-dependent phosphoribosylglycinamide formyltransferase (392 aa).

N(1)-(5-phospho-beta-D-ribosyl)glycinamide contacts are provided by residues 15–16 (EL) and E75. ATP is bound by residues R107, K148, 153–158 (SSGKGQ), 188–191 (EEFL), and E196. The region spanning 112–302 (DLAAGELNLR…EFELHLRAVL (191 aa)) is the ATP-grasp domain. 2 residues coordinate Mg(2+): E261 and E273. N(1)-(5-phospho-beta-D-ribosyl)glycinamide-binding positions include D280, K350, and 357-358 (RR).

The protein belongs to the PurK/PurT family. Homodimer.

It carries out the reaction N(1)-(5-phospho-beta-D-ribosyl)glycinamide + formate + ATP = N(2)-formyl-N(1)-(5-phospho-beta-D-ribosyl)glycinamide + ADP + phosphate + H(+). The protein operates within purine metabolism; IMP biosynthesis via de novo pathway; N(2)-formyl-N(1)-(5-phospho-D-ribosyl)glycinamide from N(1)-(5-phospho-D-ribosyl)glycinamide (formate route): step 1/1. In terms of biological role, involved in the de novo purine biosynthesis. Catalyzes the transfer of formate to 5-phospho-ribosyl-glycinamide (GAR), producing 5-phospho-ribosyl-N-formylglycinamide (FGAR). Formate is provided by PurU via hydrolysis of 10-formyl-tetrahydrofolate. The protein is Formate-dependent phosphoribosylglycinamide formyltransferase of Synechococcus sp. (strain CC9605).